Here is a 1503-residue protein sequence, read N- to C-terminus: Lysophospholipase NTE1 (1503 aa).

The Cytoplasmic portion of the chain corresponds to 1–25; sequence MDSSTAALATASAKLDAVAQQGSSS. The helical transmembrane segment at 26–46 threads the bilayer; it reads WIGFFANIILGIISLVYSILY. Over 47–71 the chain is Lumenal; the sequence is SVLKLTTFSIPSLLYTLFSTSLTVT. Residues 72–92 traverse the membrane as a helical segment; the sequence is MNATTLMLIIVLVFSLVSWFV. Residues 93–1503 lie on the Cytoplasmic side of the membrane; that stretch reads RYRYLNMYSR…RTMAPRRASI (1411 aa). Disordered stretches follow at residues 252 to 348, 454 to 561, and 722 to 745; these read RHGG…TTSV, TKGI…SNPF, and KNES…RFMD. Composition is skewed to polar residues over residues 262–272, 285–302, 487–496, 506–542, 552–561, and 723–737; these read TSATETYTSSR, STVS…SSHG, QRPSSVTASP, KHTS…STLL, PLSQRTSNPF, and NESS…QQGS. A nucleoside 3',5'-cyclic phosphate-binding positions include 658 to 777 and 821 to 941; these read GLPV…GYVG and RLTN…IASR. The 165-residue stretch at 1200–1364 folds into the PNPLA domain; it reads LVLGGGGARG…IDNLTVSHMK (165 aa). The short motif at 1204-1209 is the GXGXXG element; that stretch reads GGGARG. The short motif at 1231-1235 is the GXSXG element; it reads GTSIG. Ser-1233 functions as the Nucleophile in the catalytic mechanism. The Proton acceptor role is filled by Asp-1351. A DGA/G motif is present at residues 1351 to 1353; sequence DGG.

This sequence belongs to the NTE family.

The protein resides in the endoplasmic reticulum membrane. The catalysed reaction is a 1-acyl-sn-glycero-3-phosphocholine + H2O = sn-glycerol 3-phosphocholine + a fatty acid + H(+). Its activity is regulated as follows. Inhibited by organophosphorus esters. Functionally, intracellular phospholipase B that catalyzes the double deacylation of phosphatidylcholine (PC) to glycerophosphocholine (GroPCho). Plays an important role in membrane lipid homeostasis. Responsible for the rapid PC turnover in response to inositol, elevated temperatures, or when choline is present in the growth medium. The protein is Lysophospholipase NTE1 (NTE1) of Pyricularia oryzae (strain 70-15 / ATCC MYA-4617 / FGSC 8958) (Rice blast fungus).